The sequence spans 260 residues: Hydroxyethylthiazole kinase (260 aa).

ATP-binding residues include Arg-126 and Ser-172. Residue Gly-199 coordinates substrate.

It belongs to the Thz kinase family. It depends on Mg(2+) as a cofactor.

It carries out the reaction 5-(2-hydroxyethyl)-4-methylthiazole + ATP = 4-methyl-5-(2-phosphooxyethyl)-thiazole + ADP + H(+). Its pathway is cofactor biosynthesis; thiamine diphosphate biosynthesis; 4-methyl-5-(2-phosphoethyl)-thiazole from 5-(2-hydroxyethyl)-4-methylthiazole: step 1/1. Its function is as follows. Catalyzes the phosphorylation of the hydroxyl group of 4-methyl-5-beta-hydroxyethylthiazole (THZ). In Burkholderia thailandensis (strain ATCC 700388 / DSM 13276 / CCUG 48851 / CIP 106301 / E264), this protein is Hydroxyethylthiazole kinase.